A 431-amino-acid polypeptide reads, in one-letter code: Adenylosuccinate synthetase (431 aa).

GTP-binding positions include 13–19 and 41–43; these read GDEGKGK and GHT. The Proton acceptor role is filled by Asp-14. Residues Asp-14 and Gly-41 each coordinate Mg(2+). IMP contacts are provided by residues 14–17, 39–42, Thr-130, Arg-144, Gln-225, Thr-240, and Arg-304; these read DEGK and NAGH. The active-site Proton donor is His-42. Position 300–306 (300–306) interacts with substrate; sequence ATTGRKR. GTP contacts are provided by residues Arg-306, 332–334, and 415–417; these read KLD and STG.

This sequence belongs to the adenylosuccinate synthetase family. Homodimer. Mg(2+) serves as cofactor.

It is found in the cytoplasm. It carries out the reaction IMP + L-aspartate + GTP = N(6)-(1,2-dicarboxyethyl)-AMP + GDP + phosphate + 2 H(+). It functions in the pathway purine metabolism; AMP biosynthesis via de novo pathway; AMP from IMP: step 1/2. In terms of biological role, plays an important role in the de novo pathway of purine nucleotide biosynthesis. Catalyzes the first committed step in the biosynthesis of AMP from IMP. This Shewanella piezotolerans (strain WP3 / JCM 13877) protein is Adenylosuccinate synthetase.